The chain runs to 310 residues: Methionyl-tRNA formyltransferase (310 aa).

110-113 (SLLP) serves as a coordination point for (6S)-5,6,7,8-tetrahydrofolate.

It belongs to the Fmt family.

It catalyses the reaction L-methionyl-tRNA(fMet) + (6R)-10-formyltetrahydrofolate = N-formyl-L-methionyl-tRNA(fMet) + (6S)-5,6,7,8-tetrahydrofolate + H(+). Functionally, attaches a formyl group to the free amino group of methionyl-tRNA(fMet). The formyl group appears to play a dual role in the initiator identity of N-formylmethionyl-tRNA by promoting its recognition by IF2 and preventing the misappropriation of this tRNA by the elongation apparatus. In Halorhodospira halophila (strain DSM 244 / SL1) (Ectothiorhodospira halophila (strain DSM 244 / SL1)), this protein is Methionyl-tRNA formyltransferase.